The chain runs to 60 residues: Cytochrome c oxidase subunit 9, mitochondrial (60 aa).

Residues Met1 to Ile15 lie on the Mitochondrial matrix side of the membrane. A helical transmembrane segment spans residues Ile16–His38. Over Lys39–Lys57 the chain is Mitochondrial intermembrane. The propeptide at Ala58–Asn60 is removed in mature form.

It belongs to the fungal cytochrome c oxidase subunit 7a family. Component of the cytochrome c oxidase (complex IV, CIV), a multisubunit enzyme composed of a catalytic core of 3 subunits and several supernumerary subunits. The complex exists as a monomer or a dimer and forms supercomplexes (SCs) in the inner mitochondrial membrane with ubiquinol-cytochrome c oxidoreductase (cytochrome b-c1 complex, complex III, CIII).

The protein resides in the mitochondrion inner membrane. It functions in the pathway energy metabolism; oxidative phosphorylation. Its function is as follows. Component of the cytochrome c oxidase, the last enzyme in the mitochondrial electron transport chain which drives oxidative phosphorylation. The respiratory chain contains 3 multisubunit complexes succinate dehydrogenase (complex II, CII), ubiquinol-cytochrome c oxidoreductase (cytochrome b-c1 complex, complex III, CIII) and cytochrome c oxidase (complex IV, CIV), that cooperate to transfer electrons derived from NADH and succinate to molecular oxygen, creating an electrochemical gradient over the inner membrane that drives transmembrane transport and the ATP synthase. Cytochrome c oxidase is the component of the respiratory chain that catalyzes the reduction of oxygen to water. Electrons originating from reduced cytochrome c in the intermembrane space (IMS) are transferred via the dinuclear copper A center (CU(A)) of subunit 2 and heme A of subunit 1 to the active site in subunit 1, a binuclear center (BNC) formed by heme A3 and copper B (CU(B)). The BNC reduces molecular oxygen to 2 water molecules using 4 electrons from cytochrome c in the IMS and 4 protons from the mitochondrial matrix. In Candida glabrata (strain ATCC 2001 / BCRC 20586 / JCM 3761 / NBRC 0622 / NRRL Y-65 / CBS 138) (Yeast), this protein is Cytochrome c oxidase subunit 9, mitochondrial (COX9).